The following is a 244-amino-acid chain: Geranylgeranylglyceryl phosphate synthase (244 aa).

Residues Asp20 and Ser49 each contribute to the Mg(2+) site. Residues 169–175, 200–201, and 222–223 each bind sn-glycerol 1-phosphate; these read YLEAGSG, GG, and GT.

The protein belongs to the GGGP/HepGP synthase family. Group II subfamily. Requires Mg(2+) as cofactor.

The protein localises to the cytoplasm. The enzyme catalyses sn-glycerol 1-phosphate + (2E,6E,10E)-geranylgeranyl diphosphate = sn-3-O-(geranylgeranyl)glycerol 1-phosphate + diphosphate. It participates in membrane lipid metabolism; glycerophospholipid metabolism. Its function is as follows. Prenyltransferase that catalyzes the transfer of the geranylgeranyl moiety of geranylgeranyl diphosphate (GGPP) to the C3 hydroxyl of sn-glycerol-1-phosphate (G1P). This reaction is the first ether-bond-formation step in the biosynthesis of archaeal membrane lipids. The sequence is that of Geranylgeranylglyceryl phosphate synthase from Korarchaeum cryptofilum (strain OPF8).